The sequence spans 94 residues: Dynein light chain, cytoplasmic (94 aa).

Belongs to the dynein light chain family. In terms of assembly, homodimer. Cytoplasmic dynein consists of two catalytic heavy chains (HCs) and a number of non-catalytic subunits which present intermediate chains (ICs), light intermediate chains (LICs) and light chains (LCs). Component of the nuclear pore complex (NPC). The nuclear pore complex constitutes the exclusive means of nucleocytoplasmic transport. NPCs allow the passive diffusion of ions and small molecules and the active, nuclear transport receptor-mediated bidirectional transport of macromolecules such as proteins, RNAs, ribonucleoparticles (RNPs), and ribosomal subunits across the nuclear envelope. Due to its 8-fold rotational symmetry, all subunits are present with 8 copies or multiples thereof.

Its subcellular location is the cytoplasm. The protein localises to the cytoskeleton. It is found in the nucleus. The protein resides in the nuclear pore complex. Its function is as follows. Acts as one of several non-catalytic accessory components of the cytoplasmic dynein complex that are thought to be involved in linking dynein to cargos and to adapter proteins that regulate dynein function. Cytoplasmic dynein 1 acts as a motor for the intracellular retrograde motility of vesicles and organelles along microtubules. May play a role in changing or maintaining the spatial distribution of cytoskeletal structures. Also a component of the nuclear pore complex. The sequence is that of Dynein light chain, cytoplasmic (nudG) from Emericella nidulans (strain FGSC A4 / ATCC 38163 / CBS 112.46 / NRRL 194 / M139) (Aspergillus nidulans).